A 610-amino-acid polypeptide reads, in one-letter code: tRNA uridine 5-carboxymethylaminomethyl modification enzyme MnmG (610 aa).

14–19 is an FAD binding site; the sequence is GAGHAG. 274 to 288 is an NAD(+) binding site; that stretch reads GPRYCPSIEDKIVKF.

Belongs to the MnmG family. Homodimer. Heterotetramer of two MnmE and two MnmG subunits. Requires FAD as cofactor.

The protein localises to the cytoplasm. Its function is as follows. NAD-binding protein involved in the addition of a carboxymethylaminomethyl (cmnm) group at the wobble position (U34) of certain tRNAs, forming tRNA-cmnm(5)s(2)U34. In Chlamydia trachomatis serovar A (strain ATCC VR-571B / DSM 19440 / HAR-13), this protein is tRNA uridine 5-carboxymethylaminomethyl modification enzyme MnmG.